Consider the following 43-residue polypeptide: Protein PsbN (43 aa).

A helical transmembrane segment spans residues 4–24 (AIVLIISVGAALVAVTGYGIY).

The protein belongs to the PsbN family.

It localises to the cellular thylakoid membrane. Functionally, may play a role in photosystem I and II biogenesis. In Trichormus variabilis (strain ATCC 29413 / PCC 7937) (Anabaena variabilis), this protein is Protein PsbN.